Consider the following 383-residue polypeptide: Mating-type protein MAT-1 (383 aa).

Residues 60-117 (KARKALNAFVGFRCYYVTIPMFKSWPMKKLSNLIGLLWEADPNKSLWSLMAKAWSTIR) constitute a DNA-binding region (alpha box).

The protein belongs to the MATALPHA1 family.

The protein resides in the nucleus. In terms of biological role, mating type proteins are sequence specific DNA-binding proteins that act as master switches in fungal differentiation by controlling gene expression in a cell type-specific fashion. Transcriptional activator that induces the transcription of alpha-specific genes. This Cochliobolus heterostrophus (Southern corn leaf blight fungus) protein is Mating-type protein MAT-1 (MAT1).